Reading from the N-terminus, the 618-residue chain is UvrABC system protein C (618 aa).

The GIY-YIG domain occupies 20–98; the sequence is TAPGVYRMYA…IKSLSPRYNV (79 aa). Residues 207-242 form the UVR domain; the sequence is DQLGEEIMHSMQQASEALEFERAARLRDLLSSLRSM.

The protein belongs to the UvrC family. In terms of assembly, interacts with UvrB in an incision complex.

It is found in the cytoplasm. Functionally, the UvrABC repair system catalyzes the recognition and processing of DNA lesions. UvrC both incises the 5' and 3' sides of the lesion. The N-terminal half is responsible for the 3' incision and the C-terminal half is responsible for the 5' incision. The chain is UvrABC system protein C from Xanthomonas campestris pv. campestris (strain B100).